The primary structure comprises 184 residues: Ribulose bisphosphate carboxylase small subunit, chloroplastic 2 (184 aa).

Residues 1–59 (MASSMMSNAATAVAVAATSGGAQANMVAPFNGLKSIASFPVTRKSNDITSIASNGGRVQ) constitute a chloroplast transit peptide.

This sequence belongs to the RuBisCO small chain family. As to quaternary structure, heterohexadecamer of 8 large and 8 small subunits.

It is found in the plastid. The protein resides in the chloroplast. Its function is as follows. RuBisCO catalyzes two reactions: the carboxylation of D-ribulose 1,5-bisphosphate, the primary event in carbon dioxide fixation, as well as the oxidative fragmentation of the pentose substrate. Both reactions occur simultaneously and in competition at the same active site. Although the small subunit is not catalytic it is essential for maximal activity. The sequence is that of Ribulose bisphosphate carboxylase small subunit, chloroplastic 2 from Amaranthus hypochondriacus (Prince-of-Wales feather).